We begin with the raw amino-acid sequence, 1128 residues long: Large proline-rich protein BAG6 (1128 aa).

The residue at position 1 (Met1) is an N-acetylmethionine. The Ubiquitin-like domain occupies 17–92; the sequence is LEVLVKTLDS…HLVERAPPQT (76 aa). 5 disordered regions span residues 87 to 126, 185 to 267, 380 to 435, 456 to 523, and 555 to 598; these read RAPP…SVHD, CRGG…NHPS, VTMT…AASH, IQDS…ALPG, and PGMA…SASD. Low complexity predominate over residues 95–108; that stretch reads PSGASSGTGSASAT. Ser96 is modified (phosphoserine). At Thr117 the chain carries Phosphothreonine. Residues 189–201 are compositionally biased toward polar residues; it reads SQAQHSQPPSQMP. Repeat 1 spans residues 236-265; sequence RASAQSPGLSPSGPAPAGPTPAPETNAPNH. The interval 236-630 is 4 X 29 AA approximate repeats; that stretch reads RASAQSPGLS…MTSPTITVAM (395 aa). Residues 238–247 show a composition bias toward low complexity; sequence SAQSPGLSPS. Composition is skewed to pro residues over residues 248 to 257 and 388 to 402; these read GPAPAGPTPA and RPPP…PPGP. Residues 403–412 are compositionally biased toward low complexity; sequence GQASSLAPSS. Repeat 2 spans residues 410–438; sequence PSSTTVESSTEGAPPPGPAPPPAASHPRV. 2 stretches are compositionally biased toward pro residues: residues 422-433 and 502-515; these read APPPGPAPPPAA and PTPP…PGGP. Residues 564–581 are compositionally biased toward low complexity; sequence ATASASAGTTNTATTAGP. 2 tandem repeats follow at residues 569–596 and 602–630. Over residues 583 to 594 the composition is skewed to pro residues; the sequence is PGGPAQPPPPQP. Disordered regions lie at residues 648 to 689 and 939 to 1128; these read QTAA…GLGP and VGDP…AEDP. Residues 652–677 are compositionally biased toward pro residues; that stretch reads PPAPPPPPPPPPPAPEQQTAPPPGSP. Gly residues predominate over residues 678 to 688; sequence PGGAGSPGGLG. 2 positions are modified to phosphoserine: Ser960 and Ser969. Residues 999 to 1016 are compositionally biased toward low complexity; sequence AAAETEPWAAAVPPEWVP. The required for interaction with GET4 stretch occupies residues 1006 to 1036; it reads WAAAVPPEWVPIIQQDIQSQRKVKPQPPLSD. The Nuclear localization site motif lies at 1008-1050; the sequence is AAVPPEWVPIIQQDIQSQRKVKPQPPLSDAYLSGMPAKRRKTM. A sufficient for the delivery of client proteins to the endoplasmic reticulum region spans residues 1018 to 1128; sequence IQQDIQSQRK…NAHRAFAEDP (111 aa). Thr1049 bears the Phosphothreonine mark. Residues 1054 to 1111 form a BAG-similar domain, required and sufficient for interaction with UBL4A region; that stretch reads GPQLLLSEAVSRAAKAAGARPLTSPESLSRDLEAPEVQESYRQQLRADIQKRLQEDPN. Residues 1062–1072 show a composition bias toward low complexity; sequence AVSRAAKAAGA. Residues Ser1077 and Ser1113 each carry the phosphoserine modification.

In terms of assembly, component of the BAG6/BAT3 complex, also named BAT3 complex, at least composed of BAG6, UBL4A and GET4/TRC35. Interacts with GET4; the interaction is direct and localizes BAG6 in the cytosol. Interacts with UBL4A; the interaction is direct and required for UBL4A protein stability. Interacts with AIFM1. Interacts with HSPA2. Interacts with CTCFL. Interacts with p300/EP300. Interacts (via ubiquitin-like domain) with RNF126; required for BAG6-dependent ubiquitination of proteins mislocalized to the cytosol. Interacts (via ubiquitin-like domain) with SGTA; SGTA competes with RNF126 by binding the same region of BAG6, thereby promoting deubiquitination of BAG6-target proteins and rescuing them from degradation. Interacts with ricin A chain. Interacts with VCP and AMFR; both form the VCP/p97-AMFR/gp78 complex. Interacts with SYVN1. Interacts with USP13; the interaction is direct and may mediate UBL4A deubiquitination. Interacts with ZFAND2B. Interacts with KPNA2. Interacts with UBQLN4. In terms of processing, ricin can induce a cleavage by the caspase CASP3. The released C-terminal peptide induces apoptosis.

It localises to the cytoplasm. Its subcellular location is the cytosol. It is found in the nucleus. The protein localises to the secreted. The protein resides in the extracellular exosome. In terms of biological role, ATP-independent molecular chaperone preventing the aggregation of misfolded and hydrophobic patches-containing proteins. Functions as part of a cytosolic protein quality control complex, the BAG6/BAT3 complex, which maintains these client proteins in a soluble state and participates in their proper delivery to the endoplasmic reticulum or alternatively can promote their sorting to the proteasome where they undergo degradation. The BAG6/BAT3 complex is involved in the post-translational delivery of tail-anchored/type II transmembrane proteins to the endoplasmic reticulum membrane. Recruited to ribosomes, it interacts with the transmembrane region of newly synthesized tail-anchored proteins and together with SGTA and ASNA1 mediates their delivery to the endoplasmic reticulum. Client proteins that cannot be properly delivered to the endoplasmic reticulum are ubiquitinated by RNF126, an E3 ubiquitin-protein ligase associated with BAG6 and are sorted to the proteasome. SGTA which prevents the recruitment of RNF126 to BAG6 may negatively regulate the ubiquitination and the proteasomal degradation of client proteins. Similarly, the BAG6/BAT3 complex also functions as a sorting platform for proteins of the secretory pathway that are mislocalized to the cytosol either delivering them to the proteasome for degradation or to the endoplasmic reticulum. The BAG6/BAT3 complex also plays a role in the endoplasmic reticulum-associated degradation (ERAD), a quality control mechanism that eliminates unwanted proteins of the endoplasmic reticulum through their retrotranslocation to the cytosol and their targeting to the proteasome. It maintains these retrotranslocated proteins in an unfolded yet soluble state condition in the cytosol to ensure their proper delivery to the proteasome. BAG6 is also required for selective ubiquitin-mediated degradation of defective nascent chain polypeptides by the proteasome. In this context, it may participate in the production of antigenic peptides and play a role in antigen presentation in immune response. BAG6 is also involved in endoplasmic reticulum stress-induced pre-emptive quality control, a mechanism that selectively attenuates the translocation of newly synthesized proteins into the endoplasmic reticulum and reroutes them to the cytosol for proteasomal degradation. BAG6 may ensure the proper degradation of these proteins and thereby protects the endoplasmic reticulum from protein overload upon stress. By inhibiting the polyubiquitination and subsequent proteasomal degradation of HSPA2 it may also play a role in the assembly of the synaptonemal complex during spermatogenesis. Also positively regulates apoptosis by interacting with and stabilizing the proapoptotic factor AIFM1. By controlling the steady-state expression of the IGF1R receptor, indirectly regulates the insulin-like growth factor receptor signaling pathway. Functionally, involved in DNA damage-induced apoptosis: following DNA damage, accumulates in the nucleus and forms a complex with p300/EP300, enhancing p300/EP300-mediated p53/TP53 acetylation leading to increase p53/TP53 transcriptional activity. When nuclear, may also act as a component of some chromatin regulator complex that regulates histone 3 'Lys-4' dimethylation (H3K4me2). Its function is as follows. Released extracellularly via exosomes, it is a ligand of the natural killer/NK cells receptor NCR3 and stimulates NK cells cytotoxicity. It may thereby trigger NK cells cytotoxicity against neighboring tumor cells and immature myeloid dendritic cells (DC). May mediate ricin-induced apoptosis. The sequence is that of Large proline-rich protein BAG6 from Sus scrofa (Pig).